The following is a 207-amino-acid chain: Large ribosomal subunit protein uL4 (207 aa).

Residues Ala50–Gly76 form a disordered region.

The protein belongs to the universal ribosomal protein uL4 family. In terms of assembly, part of the 50S ribosomal subunit.

Its function is as follows. One of the primary rRNA binding proteins, this protein initially binds near the 5'-end of the 23S rRNA. It is important during the early stages of 50S assembly. It makes multiple contacts with different domains of the 23S rRNA in the assembled 50S subunit and ribosome. In terms of biological role, forms part of the polypeptide exit tunnel. The chain is Large ribosomal subunit protein uL4 from Staphylococcus aureus (strain MRSA252).